Consider the following 199-residue polypeptide: Protein GrpE (199 aa).

Residues 1-24 (MSKQNKKDWKKFRDEHKEEHKVEN) are compositionally biased toward basic and acidic residues. The tract at residues 1 to 52 (MSKQNKKDWKKFRDEHKEEHKVENEILEEETDEESQHQEPALGHPSYTALEE) is disordered.

The protein belongs to the GrpE family. As to quaternary structure, homodimer.

Its subcellular location is the cytoplasm. Participates actively in the response to hyperosmotic and heat shock by preventing the aggregation of stress-denatured proteins, in association with DnaK and GrpE. It is the nucleotide exchange factor for DnaK and may function as a thermosensor. Unfolded proteins bind initially to DnaJ; upon interaction with the DnaJ-bound protein, DnaK hydrolyzes its bound ATP, resulting in the formation of a stable complex. GrpE releases ADP from DnaK; ATP binding to DnaK triggers the release of the substrate protein, thus completing the reaction cycle. Several rounds of ATP-dependent interactions between DnaJ, DnaK and GrpE are required for fully efficient folding. This is Protein GrpE from Legionella pneumophila (strain Lens).